The following is a 622-amino-acid chain: Threonine--tRNA ligase (622 aa).

The tract at residues 1–134 (MKTLLIHSDY…GHPLSELSRK (134 aa)) is editing domain. A catalytic region spans residues 199 to 498 (PHVKYIKEKE…TLEDKPPALP (300 aa)). Zn(2+) is bound by residues Cys-291, His-343, and His-467.

This sequence belongs to the class-II aminoacyl-tRNA synthetase family. As to quaternary structure, homodimer. It depends on Zn(2+) as a cofactor.

The protein localises to the cytoplasm. It catalyses the reaction tRNA(Thr) + L-threonine + ATP = L-threonyl-tRNA(Thr) + AMP + diphosphate + H(+). In terms of biological role, catalyzes the attachment of threonine to tRNA(Thr) in a two-step reaction: L-threonine is first activated by ATP to form Thr-AMP and then transferred to the acceptor end of tRNA(Thr). Also edits incorrectly charged L-seryl-tRNA(Thr). In Methanococcus vannielii (strain ATCC 35089 / DSM 1224 / JCM 13029 / OCM 148 / SB), this protein is Threonine--tRNA ligase.